The chain runs to 30 residues: Alanine carboxypeptidase (30 aa).

It carries out the reaction Release of a C-terminal alanine from a peptide or a variety of pteroyl or acyl groups.. The sequence is that of Alanine carboxypeptidase from Geobacillus stearothermophilus (Bacillus stearothermophilus).